The primary structure comprises 158 residues: Dysbindin domain-containing protein 2 (158 aa).

Residues 79–158 (FLPCEESSPA…DGGAEPGPCS (80 aa)) form a disordered region. Residues 106-131 (PTSDRTTSRTSSLSSDSSNLRSPNPS) are compositionally biased toward low complexity. Phosphoserine occurs at positions 119 and 120. Thr137 is modified (phosphothreonine). Ser142 bears the Phosphoserine mark. Residues 142-151 (SDEEDGDDGG) are compositionally biased toward acidic residues.

The protein belongs to the dysbindin family. Monomer. Interacts with CSNK1D and CSNK1E.

Its function is as follows. May modulate the activity of casein kinase-1. Inhibits CSNK1D autophosphorylation (in vitro). This Mus musculus (Mouse) protein is Dysbindin domain-containing protein 2 (Dbndd2).